The following is an 83-amino-acid chain: Small ribosomal subunit protein uS17 (83 aa).

Belongs to the universal ribosomal protein uS17 family. As to quaternary structure, part of the 30S ribosomal subunit.

In terms of biological role, one of the primary rRNA binding proteins, it binds specifically to the 5'-end of 16S ribosomal RNA. This Acaryochloris marina (strain MBIC 11017) protein is Small ribosomal subunit protein uS17.